The primary structure comprises 393 residues: Riboflavin biosynthesis protein RibBA (393 aa).

Residues 1 to 200 (MQFDNIDSAL…IDDLIEYRKK (200 aa)) form a DHBP synthase region. Residues 27-28 (RE), D32, 139-143 (RNGHT), and E163 contribute to the D-ribulose 5-phosphate site. Mg(2+) is bound at residue E28. Mg(2+) is bound at residue H142. Residues 201 to 393 (LEPEIEFKAK…TKKIKMGHLI (193 aa)) are GTP cyclohydrolase II. Residue 249–253 (RLHSA) participates in GTP binding. C254, C265, and C267 together coordinate Zn(2+). Residues Q270, 291–293 (EGR), and T313 each bind GTP. D325 functions as the Proton acceptor; for GTP cyclohydrolase activity in the catalytic mechanism. R327 serves as the catalytic Nucleophile; for GTP cyclohydrolase activity. Positions 348 and 353 each coordinate GTP.

This sequence in the N-terminal section; belongs to the DHBP synthase family. The protein in the C-terminal section; belongs to the GTP cyclohydrolase II family. The cofactor is Mg(2+). It depends on Mn(2+) as a cofactor. Requires Zn(2+) as cofactor.

It catalyses the reaction D-ribulose 5-phosphate = (2S)-2-hydroxy-3-oxobutyl phosphate + formate + H(+). The catalysed reaction is GTP + 4 H2O = 2,5-diamino-6-hydroxy-4-(5-phosphoribosylamino)-pyrimidine + formate + 2 phosphate + 3 H(+). The protein operates within cofactor biosynthesis; riboflavin biosynthesis; 2-hydroxy-3-oxobutyl phosphate from D-ribulose 5-phosphate: step 1/1. It functions in the pathway cofactor biosynthesis; riboflavin biosynthesis; 5-amino-6-(D-ribitylamino)uracil from GTP: step 1/4. Its function is as follows. Catalyzes the conversion of D-ribulose 5-phosphate to formate and 3,4-dihydroxy-2-butanone 4-phosphate. Catalyzes the conversion of GTP to 2,5-diamino-6-ribosylamino-4(3H)-pyrimidinone 5'-phosphate (DARP), formate and pyrophosphate. The sequence is that of Riboflavin biosynthesis protein RibBA from Staphylococcus aureus (strain COL).